The primary structure comprises 449 residues: Monoacylglycerol lipase (449 aa).

Residue Lys82 forms a Glycyl lysine isopeptide (Lys-Gly) (interchain with G-Cter in ubiquitin) linkage. The 242-residue stretch at 151–392 (PMLIILHGLT…LLLETSTGGH (242 aa)) folds into the AB hydrolase-1 domain. The short motif at 230-234 (GFSLG) is the GXSXG element. The Nucleophile role is filled by Ser232. Residues Asp364 and His392 each act as charge relay system in the active site.

The protein belongs to the AB hydrolase superfamily. AB hydrolase 4 family.

The enzyme catalyses Hydrolyzes glycerol monoesters of long-chain fatty acids.. It carries out the reaction 1-hexadecanoylglycerol + H2O = glycerol + hexadecanoate + H(+). It catalyses the reaction 1-octadecanoylglycerol + H2O = octadecanoate + glycerol + H(+). The catalysed reaction is 1-(9Z-octadecenoyl)-glycerol + H2O = glycerol + (9Z)-octadecenoate + H(+). In terms of biological role, converts monoacylglycerides (MAG) to free fatty acids and glycerol. Has a preference for palmitoyl-MAG. Does not play a significant role in ethyl ester biosynthesis. Also possesses ester hydrolase and low but persistent TAG lipase activity. The chain is Monoacylglycerol lipase from Saccharomyces cerevisiae (strain ATCC 204508 / S288c) (Baker's yeast).